Consider the following 76-residue polypeptide: Small ribosomal subunit protein uS17 (76 aa).

Belongs to the universal ribosomal protein uS17 family. Part of the 30S ribosomal subunit.

Functionally, one of the primary rRNA binding proteins, it binds specifically to the 5'-end of 16S ribosomal RNA. The protein is Small ribosomal subunit protein uS17 of Ruegeria sp. (strain TM1040) (Silicibacter sp.).